We begin with the raw amino-acid sequence, 853 residues long: DNA mismatch repair protein MutS (853 aa).

Gly-614–Ser-621 contributes to the ATP binding site.

Belongs to the DNA mismatch repair MutS family.

Functionally, this protein is involved in the repair of mismatches in DNA. It is possible that it carries out the mismatch recognition step. This protein has a weak ATPase activity. This is DNA mismatch repair protein MutS from Cronobacter sakazakii (strain ATCC BAA-894) (Enterobacter sakazakii).